The chain runs to 467 residues: Neuromedin-K receptor (467 aa).

The Extracellular portion of the chain corresponds to 1–86; sequence MDSFAAAETW…TNQFVQPSWR (86 aa). Residues Asn23, Asn50, and Asn75 are each glycosylated (N-linked (GlcNAc...) asparagine). A helical membrane pass occupies residues 87 to 109; sequence IALWSLAYGVVVAVAVFGNLIVI. The Cytoplasmic segment spans residues 110-119; that stretch reads WIILAHKRMR. The chain crosses the membrane as a helical span at residues 120-141; the sequence is TVTNYFLVNLAFSDASMAAFNT. Residues 142–161 lie on the Extracellular side of the membrane; sequence LVNFIYALHSEWYFGANYCR. Cysteines 160 and 235 form a disulfide. The chain crosses the membrane as a helical span at residues 162 to 183; the sequence is FQNFFPITAVFASIYSMTAIAV. At 184 to 203 the chain is on the cytoplasmic side; the sequence is DRYMAIIDPLKPRLSATATK. A helical membrane pass occupies residues 204–224; the sequence is IVIGSIWILAFLLALPQCLYS. Residues 225–247 are Extracellular-facing; it reads KTKVMPGRTLCYVQWPEGPKQHF. A helical membrane pass occupies residues 248 to 272; it reads IYHIIVIILVYCFPLLIMGITYTIV. Residues 273–301 are Cytoplasmic-facing; it reads GITLWGGEIPGDTCDKYHEQLKAKRKVVK. A helical membrane pass occupies residues 302–323; that stretch reads MMIIVVVTFAICWLPYHIYFIL. Residues 324–336 are Extracellular-facing; the sequence is TAIYQQLNRWKYI. Residues 337–361 traverse the membrane as a helical segment; that stretch reads QQVYLASFWLAMSSTMYNPIIYCCL. At 362–467 the chain is on the cytoplasmic side; it reads NKRFRAGFKR…SPYTSMEEYS (106 aa). Cys376 carries S-palmitoyl cysteine lipidation. Residues 416–467 are disordered; it reads DPSDADNTRSSRKKRATPGDPNFNGCSRRNSKSASTTSSFISSPYTSMEEYS. A compositionally biased stretch (low complexity) spans 447-467; it reads KSASTTSSFISSPYTSMEEYS.

The protein belongs to the G-protein coupled receptor 1 family.

Its subcellular location is the cell membrane. In terms of biological role, this is a receptor for the tachykinin neuropeptide neuromedin-K (neurokinin B). It is associated with G proteins that activate a phosphatidylinositol-calcium second messenger system. The sequence is that of Neuromedin-K receptor (TACR3) from Oryctolagus cuniculus (Rabbit).